A 91-amino-acid polypeptide reads, in one-letter code: Small ribosomal subunit protein uS19 (91 aa).

The protein belongs to the universal ribosomal protein uS19 family.

In terms of biological role, protein S19 forms a complex with S13 that binds strongly to the 16S ribosomal RNA. The polypeptide is Small ribosomal subunit protein uS19 (Verminephrobacter eiseniae (strain EF01-2)).